A 394-amino-acid polypeptide reads, in one-letter code: RILP-like protein 1 (394 aa).

Positions 2–89 constitute an RH1 domain; sequence EGISALEKNV…RLERMDRIEK (88 aa). Residues 68 to 312 adopt a coiled-coil conformation; that stretch reads EMEELRLELD…KVFMLQEELA (245 aa). Positions 282–347 constitute an RH2 domain; sequence RPRFTLQELR…IPQESGIKRL (66 aa). Positions 318-337 are disordered; that stretch reads EADEEHKLPQSSPVIDSKAP.

Belongs to the RILPL family.

It is found in the cytoplasm. It localises to the cytosol. The protein resides in the cytoskeleton. Its subcellular location is the microtubule organizing center. The protein localises to the centrosome. It is found in the cell projection. It localises to the cilium. Plays a role in the regulation of cell shape and polarity. Plays a role in cellular protein transport, including protein transport away from primary cilia. Neuroprotective protein. The chain is RILP-like protein 1 (rilpl1) from Xenopus tropicalis (Western clawed frog).